The primary structure comprises 884 residues: Probable LRR receptor-like serine/threonine-protein kinase PAM74 (884 aa).

The signal sequence occupies residues 1-23; the sequence is MDSPCWLLLLLLGAFAIIGCVQA. At 24-510 the chain is on the extracellular side; sequence QDQQEFISLD…TEKNSKKKFP (487 aa). N-linked (GlcNAc...) asparagine glycans are attached at residues asparagine 143, asparagine 182, asparagine 200, asparagine 256, asparagine 289, asparagine 400, asparagine 403, asparagine 417, asparagine 433, asparagine 444, asparagine 465, and asparagine 470. LRR repeat units lie at residues 412 to 433, 436 to 457, and 460 to 480; these read RVLS…AIQN, HLEK…FLAQ, and SLVI…QGLR. Residues 511 to 531 form a helical membrane-spanning segment; that stretch reads VVIVASVASVAIIVAVLVIIF. The Cytoplasmic segment spans residues 532–884; that stretch reads VLSKKKSSTV…FDTELFPRAR (353 aa). Residue threonine 570 is modified to Phosphothreonine. The Protein kinase domain occupies 579–852; the sequence is NNFQRVVGEG…QVANELKECL (274 aa). ATP-binding positions include 585–593 and lysine 607; that span reads VGEGGFGVV. The residue at position 652 (tyrosine 652) is a Phosphotyrosine. The Proton acceptor role is filled by aspartate 704. A Phosphoserine modification is found at serine 738. Phosphothreonine occurs at positions 739 and 744. Phosphotyrosine is present on tyrosine 752.

It belongs to the protein kinase superfamily. Ser/Thr protein kinase family. As to quaternary structure, binds to the ammonium transporter AMT1-1.

The protein resides in the membrane. It carries out the reaction L-seryl-[protein] + ATP = O-phospho-L-seryl-[protein] + ADP + H(+). The catalysed reaction is L-threonyl-[protein] + ATP = O-phospho-L-threonyl-[protein] + ADP + H(+). Functionally, required for accurate photosynthesis. The polypeptide is Probable LRR receptor-like serine/threonine-protein kinase PAM74 (PAM74) (Arabidopsis thaliana (Mouse-ear cress)).